Here is a 151-residue protein sequence, read N- to C-terminus: Probable transcriptional regulator syrB3 (151 aa).

A disordered region spans residues 1–65 (MVDESNAGPV…QERSEKLRLI (65 aa)). Over residues 7–23 (AGPVAPAVVADAEVKAP) the composition is skewed to low complexity. Over residues 52 to 65 (GYSEQERSEKLRLI) the composition is skewed to basic and acidic residues.

This sequence belongs to the SyrB family.

The polypeptide is Probable transcriptional regulator syrB3 (syrB3) (Rhizobium meliloti (strain 1021) (Ensifer meliloti)).